A 247-amino-acid chain; its full sequence is PF03932 family protein CutC (247 aa).

It belongs to the CutC family.

It is found in the cytoplasm. This is PF03932 family protein CutC from Klebsiella pneumoniae subsp. pneumoniae (strain ATCC 700721 / MGH 78578).